We begin with the raw amino-acid sequence, 1204 residues long: Integrator complex subunit 2 (1204 aa).

Residues 428–444 traverse the membrane as a helical segment; it reads FVSLSFCMLLAFSTLVS.

The protein belongs to the Integrator subunit 2 family. Component of the Integrator complex, composed of core subunits INTS1, INTS2, INTS3, INTS4, INTS5, INTS6, INTS7, INTS8, INTS9/RC74, INTS10, INTS11/CPSF3L, INTS12, INTS13, INTS14 and INTS15. The core complex associates with protein phosphatase 2A subunits PPP2CA and PPP2R1A, to form the Integrator-PP2A (INTAC) complex.

The protein resides in the nucleus. It localises to the nucleus membrane. Its subcellular location is the cytoplasm. Functionally, component of the integrator complex, a multiprotein complex that terminates RNA polymerase II (Pol II) transcription in the promoter-proximal region of genes. The integrator complex provides a quality checkpoint during transcription elongation by driving premature transcription termination of transcripts that are unfavorably configured for transcriptional elongation: the complex terminates transcription by (1) catalyzing dephosphorylation of the C-terminal domain (CTD) of Pol II subunit POLR2A/RPB1 and SUPT5H/SPT5, (2) degrading the exiting nascent RNA transcript via endonuclease activity and (3) promoting the release of Pol II from bound DNA. The integrator complex is also involved in terminating the synthesis of non-coding Pol II transcripts, such as enhancer RNAs (eRNAs), small nuclear RNAs (snRNAs), telomerase RNAs and long non-coding RNAs (lncRNAs). Mediates recruitment of cytoplasmic dynein to the nuclear envelope, probably as component of the integrator complex. In Homo sapiens (Human), this protein is Integrator complex subunit 2.